A 129-amino-acid polypeptide reads, in one-letter code: Lysozyme C (129 aa).

A C-type lysozyme domain is found at 1-129 (KVYGRCELAA…VQAWIRGCRL (129 aa)). Cystine bridges form between cysteine 6-cysteine 127, cysteine 30-cysteine 115, cysteine 64-cysteine 80, and cysteine 76-cysteine 94. Catalysis depends on residues glutamate 35 and aspartate 52.

This sequence belongs to the glycosyl hydrolase 22 family. Monomer.

Its subcellular location is the secreted. The enzyme catalyses Hydrolysis of (1-&gt;4)-beta-linkages between N-acetylmuramic acid and N-acetyl-D-glucosamine residues in a peptidoglycan and between N-acetyl-D-glucosamine residues in chitodextrins.. Its function is as follows. Lysozymes have primarily a bacteriolytic function; those in tissues and body fluids are associated with the monocyte-macrophage system and enhance the activity of immunoagents. The polypeptide is Lysozyme C (LYZ) (Tragopan satyra (Satyr tragopan)).